The sequence spans 194 residues: WASH complex subunit 3 (194 aa).

Met1 carries the N-acetylmethionine modification. The stretch at 46 to 74 (AVCEEKLADLSLRIQQIETTLNILDAKLS) forms a coiled coil. Disordered stretches follow at residues 94 to 126 (VTNG…PSEN) and 158 to 194 (SEGL…SFSD). A compositionally biased stretch (low complexity) spans 98-113 (SHSETTSEQTQQNSTQ). The span at 114 to 126 (DSGAQESEAPSEN) shows a compositional bias: polar residues.

Belongs to the CCDC53 family. As to quaternary structure, component of the WASH core complex also described as WASH regulatory complex (SHRC) composed of WASHC1, WASHC2, WASHC3, WASHC4 and WASHC5. The WASH core complex associates via WASHC2 with the F-actin-capping protein dimer (formed by CAPZA1, CAPZA2 or CAPZA3 and CAPZB) in a transient or substoichiometric manner which was initially described as WASH complex.

The protein localises to the early endosome. Its function is as follows. Acts as a component of the WASH core complex that functions as a nucleation-promoting factor (NPF) at the surface of endosomes, where it recruits and activates the Arp2/3 complex to induce actin polymerization, playing a key role in the fission of tubules that serve as transport intermediates during endosome sortingg. The sequence is that of WASH complex subunit 3 from Mus musculus (Mouse).